A 169-amino-acid chain; its full sequence is Sec-independent protein translocase protein TatB (169 aa).

A helical membrane pass occupies residues 1–21; sequence MFDIGFLELAVIAVIGLIVIG. Residues 98 to 169 form a disordered region; sequence EAEEAKLQTP…TTKTEPANDR (72 aa). Over residues 134-143 the composition is skewed to basic and acidic residues; that stretch reads PPEEPSKVEA. Residues 146–169 are compositionally biased toward polar residues; it reads SAETPQANNQDQQPTTKTEPANDR.

Belongs to the TatB family. As to quaternary structure, the Tat system comprises two distinct complexes: a TatABC complex, containing multiple copies of TatA, TatB and TatC subunits, and a separate TatA complex, containing only TatA subunits. Substrates initially bind to the TatABC complex, which probably triggers association of the separate TatA complex to form the active translocon.

It localises to the cell inner membrane. Part of the twin-arginine translocation (Tat) system that transports large folded proteins containing a characteristic twin-arginine motif in their signal peptide across membranes. Together with TatC, TatB is part of a receptor directly interacting with Tat signal peptides. TatB may form an oligomeric binding site that transiently accommodates folded Tat precursor proteins before their translocation. In Saccharophagus degradans (strain 2-40 / ATCC 43961 / DSM 17024), this protein is Sec-independent protein translocase protein TatB.